We begin with the raw amino-acid sequence, 145 residues long: Zinc finger C2H2 protein ECU06_1150 (145 aa).

The C2H2-type 1; atypical zinc-finger motif lies at 35 to 57 (KDCARYGEAQASKHALLAHARRH). The C2H2-type 2 zinc finger occupies 63–85 (FECHLCGKDYTRSDPLKKHLLRH).

This Encephalitozoon cuniculi (strain GB-M1) (Microsporidian parasite) protein is Zinc finger C2H2 protein ECU06_1150.